The primary structure comprises 787 residues: Integrin beta-3 (787 aa).

The N-terminal stretch at 1–25 (MRTRRPGQLWATLLALGALAGVVVG) is a signal peptide. At 27–717 (SNICTTRGVN…EEPECPKGPD (691 aa)) the chain is on the extracellular side. The PSI domain maps to 29–75 (ICTTRGVNSCQQCLAVSPVCAWCSDESLPQNSPRCNLKKNLLKDKCS). Disulfide bonds link C30–C48, C38–C460, C41–C63, C51–C74, C202–C209, C257–C298, C399–C411, C431–C458, C462–C482, C473–C485, C487–C496, C498–C528, C511–C526, C520–C531, C533–C546, C548–C569, C553–C567, C561–C572, and C574–C583. The region spanning 134-376 (DYPVDIYYLM…QLIVDAYGKI (243 aa)) is the VWFA domain. Mg(2+) contacts are provided by S146 and S148. Residues S148, D151, D152, and D183 each coordinate Ca(2+). The tract at residues 202–209 (CYTMKSTC) is CX3CL1-binding. The interval 202–209 (CYTMKSTC) is involved in CX3CL1-, NRG1-, FGF1- and IGF1-binding. Residues N240, D242, P244, E245, and D276 each contribute to the Ca(2+) site. E245 is a binding site for Mg(2+). The segment at 292-312 (LPNDGRCHIGPDNHYSASTTM) is CX3CL1-binding. N345 and N396 each carry an N-linked (GlcNAc...) asparagine glycan. I-EGF domains are found at residues 462-497 (CQAF…SMCE), 498-547 (CSEE…KYCE), 548-584 (CDDF…YYCN), and 585-624 (CTTR…DTCE). Residue N477 is glycosylated (N-linked (GlcNAc...) asparagine). N584 is a glycosylation site (N-linked (GlcNAc...) asparagine). 9 cysteine pairs are disulfide-bonded: C585–C608, C592–C606, C600–C611, C613–C623, C626–C629, C633–C680, C639–C660, C642–C656, and C688–C712. N-linked (GlcNAc...) asparagine glycosylation is present at N679. The helical transmembrane segment at 718 to 738 (ILVVLLSVMGAILLIGLATLL) threads the bilayer. Over 739 to 787 (IWKLLITIHDRKEFAKFEEERARAKWDTANNPLYKEATSTFTNITYRGT) the chain is Cytoplasmic. T766 carries the phosphothreonine modification. Y772 carries the post-translational modification Phosphotyrosine. An LIR motif is present at residues 776–782 (TSTFTNI). Position 778 is a phosphothreonine (T778). The residue at position 784 (Y784) is a Phosphotyrosine.

This sequence belongs to the integrin beta chain family. In terms of assembly, heterodimer of an alpha and a beta subunit. Beta-3 (ITGB3) associates with either alpha-IIB (ITGA2B) or alpha-V (ITGAV). Interacts with FLNB and COMP. Interacts with PDIA6 following platelet stimulation. Interacts with SYK; upon activation by ITGB3 promotes platelet adhesion. Interacts with MYO10. Interacts with DAB2. Interacts with FERMT2. Integrin ITGAV:ITGB3 interacts with FBLN5 (via N-terminus). Interacts with EMP2; regulates the levels of the heterodimer ITGA5:ITGB3 integrin expression on the plasma membrane. ITGAV:ITGB3 interacts with CCN3. ITGAV:ITGB3 and ITGA2B:ITGB3 interact with SELP (via C-type lectin domain); the interaction mediates cell-cell interaction and adhesion. ITGAV:ITGB3 interacts with AGRA2. ITGAV:ITGB3 is found in a ternary complex with CX3CR1 and CX3CL1. ITGAV:ITGB3 is found in a ternary complex with NRG1 and ERBB3. ITGAV:ITGB3 is found in a ternary complex with FGF1 and FGFR1. ITGAV:ITGB3 interacts with FGF2; it is likely that FGF2 can simultaneously bind ITGAV:ITGB3 and FGF receptors. ITGAV:ITGB3 binds to IL1B. ITGAV:ITGB3 is found in a ternary complex with IGF1 and IGF1R. ITGAV:ITGB3 interacts with IGF2. ITGAV:ITGB3 interacts with FBN1. ITGAV:ITGB3 interacts with CD9, CD81 and CD151 (via second extracellular domain). Interacts (via the allosteric site (site 2)) with CXCL12 in a CXCR4-independent manner. Interacts with MXRA8/DICAM; the interaction inhibits ITGAV:ITGB3 heterodimer formation. ITGAV:ITGB3 interacts with PTN. Forms a complex with PTPRZ1 and PTN that stimulates endothelial cell migration through ITGB3 Tyr-772 phosphorylation. ITGAV:ITGB3 interacts with SLC6A4. Interacts with SLC6A4 (via C-terminus); this interaction regulates SLC6A4 trafficking. ITGA2B:ITGB3 interacts with PPIA/CYPA; the interaction is ROS and PPIase activity-dependent and is increased in the presence of thrombin. Interacts with tensin TNS3; TNS3 also interacts with PEAK1, thus acting as an adapter molecule to bridge the association of PEAK1 with ITGB3. Interacts with TM4SF19. Phosphorylated on tyrosine residues in response to thrombin-induced platelet aggregation. Probably involved in outside-in signaling.

It is found in the cell membrane. The protein localises to the cell projection. Its subcellular location is the lamellipodium membrane. It localises to the cell junction. The protein resides in the focal adhesion. It is found in the postsynaptic cell membrane. The protein localises to the synapse. Functionally, integrin alpha-V/beta-3 (ITGAV:ITGB3) is a receptor for cytotactin, fibronectin, laminin, matrix metalloproteinase-2, osteopontin, osteomodulin, prothrombin, thrombospondin, vitronectin and von Willebrand factor. Integrin alpha-IIB/beta-3 (ITGA2B:ITGB3) is a receptor for fibronectin, fibrinogen, plasminogen, prothrombin, thrombospondin and vitronectin. Integrins alpha-IIB/beta-3 and alpha-V/beta-3 recognize the sequence R-G-D in a wide array of ligands. Integrin alpha-IIB/beta-3 recognizes the sequence H-H-L-G-G-G-A-K-Q-A-G-D-V in fibrinogen gamma chain. Following activation integrin alpha-IIB/beta-3 brings about platelet/platelet interaction through binding of soluble fibrinogen. This step leads to rapid platelet aggregation which physically plugs ruptured endothelial surfaces. Fibrinogen binding enhances SELP expression in activated platelets. ITGAV:ITGB3 binds to fractalkine (CX3CL1) and acts as its coreceptor in CX3CR1-dependent fractalkine signaling. ITGAV:ITGB3 binds to NRG1 (via EGF domain) and this binding is essential for NRG1-ERBB signaling. ITGAV:ITGB3 binds to FGF1 and this binding is essential for FGF1 signaling. ITGAV:ITGB3 binds to FGF2 and this binding is essential for FGF2 signaling. ITGAV:ITGB3 binds to IGF1 and this binding is essential for IGF1 signaling. ITGAV:ITGB3 binds to IGF2 and this binding is essential for IGF2 signaling. ITGAV:ITGB3 binds to IL1B and this binding is essential for IL1B signaling. ITGAV:ITGB3 binds to PLA2G2A via a site (site 2) which is distinct from the classical ligand-binding site (site 1) and this induces integrin conformational changes and enhanced ligand binding to site 1. ITGAV:ITGB3 acts as a receptor for fibrillin-1 (FBN1) and mediates R-G-D-dependent cell adhesion to FBN1. In brain, plays a role in synaptic transmission and plasticity. Involved in the regulation of the serotonin neurotransmission, is required to localize to specific compartments within the synapse the serotonin receptor SLC6A4 and for an appropriate reuptake of serotonin. Controls excitatory synaptic strength by regulating GRIA2-containing AMPAR endocytosis, which affects AMPAR abundance and composition. ITGAV:ITGB3 acts as a receptor for CD40LG. ITGAV:ITGB3 acts as a receptor for IBSP and promotes cell adhesion and migration to IBSP. This Rattus norvegicus (Rat) protein is Integrin beta-3.